A 236-amino-acid polypeptide reads, in one-letter code: 2,3,4,5-tetrahydropyridine-2,6-dicarboxylate N-acetyltransferase (236 aa).

The protein belongs to the transferase hexapeptide repeat family. DapH subfamily.

The enzyme catalyses (S)-2,3,4,5-tetrahydrodipicolinate + acetyl-CoA + H2O = L-2-acetamido-6-oxoheptanedioate + CoA. The protein operates within amino-acid biosynthesis; L-lysine biosynthesis via DAP pathway; LL-2,6-diaminopimelate from (S)-tetrahydrodipicolinate (acetylase route): step 1/3. In terms of biological role, catalyzes the transfer of an acetyl group from acetyl-CoA to tetrahydrodipicolinate. The protein is 2,3,4,5-tetrahydropyridine-2,6-dicarboxylate N-acetyltransferase of Listeria ivanovii.